A 334-amino-acid polypeptide reads, in one-letter code: Aspartate carbamoyltransferase catalytic subunit (334 aa).

Residues Arg-71 and Thr-72 each contribute to the carbamoyl phosphate site. An L-aspartate-binding site is contributed by Lys-99. Arg-121, His-151, and Gln-154 together coordinate carbamoyl phosphate. L-aspartate is bound by residues Arg-184 and Arg-239. 2 residues coordinate carbamoyl phosphate: Gly-280 and Pro-281.

The protein belongs to the aspartate/ornithine carbamoyltransferase superfamily. ATCase family. Heterododecamer (2C3:3R2) of six catalytic PyrB chains organized as two trimers (C3), and six regulatory PyrI chains organized as three dimers (R2).

The enzyme catalyses carbamoyl phosphate + L-aspartate = N-carbamoyl-L-aspartate + phosphate + H(+). It participates in pyrimidine metabolism; UMP biosynthesis via de novo pathway; (S)-dihydroorotate from bicarbonate: step 2/3. Functionally, catalyzes the condensation of carbamoyl phosphate and aspartate to form carbamoyl aspartate and inorganic phosphate, the committed step in the de novo pyrimidine nucleotide biosynthesis pathway. This is Aspartate carbamoyltransferase catalytic subunit from Pseudomonas fluorescens (strain SBW25).